Reading from the N-terminus, the 112-residue chain is UPF0102 protein Spea_0251 (112 aa).

The protein belongs to the UPF0102 family.

The sequence is that of UPF0102 protein Spea_0251 from Shewanella pealeana (strain ATCC 700345 / ANG-SQ1).